Consider the following 422-residue polypeptide: 5-methylthioadenosine/S-adenosylhomocysteine deaminase 1 (422 aa).

2 residues coordinate Zn(2+): H56 and H58. E85 and H174 together coordinate substrate. H201 is a Zn(2+) binding site. Residues E204 and D290 each coordinate substrate. D290 provides a ligand contact to Zn(2+).

Belongs to the metallo-dependent hydrolases superfamily. MTA/SAH deaminase family. Zn(2+) serves as cofactor.

The enzyme catalyses S-adenosyl-L-homocysteine + H2O + H(+) = S-inosyl-L-homocysteine + NH4(+). It carries out the reaction S-methyl-5'-thioadenosine + H2O + H(+) = S-methyl-5'-thioinosine + NH4(+). Functionally, catalyzes the deamination of 5-methylthioadenosine and S-adenosyl-L-homocysteine into 5-methylthioinosine and S-inosyl-L-homocysteine, respectively. Is also able to deaminate adenosine. The polypeptide is 5-methylthioadenosine/S-adenosylhomocysteine deaminase 1 (Archaeoglobus fulgidus (strain ATCC 49558 / DSM 4304 / JCM 9628 / NBRC 100126 / VC-16)).